A 225-amino-acid polypeptide reads, in one-letter code: MNSPIDKLERKLGYQFKDAGLINLALTHRSANSKHNERLEFLGDSILSFVIADDLYHRFPKVNEGDMSRMRATLVRGHTLAELGREFDLGDYLKLGPGELKSGGFRRDSILADAVEAIIGAIYLDSDIEAVRGIVLSWYNSRLEAIKPGVSQKDPKTRLQEFLQGRRKPLPVYTVTNIKGEAHNQEFTVECDVAGVDKPVIGKGTSRRKAEQAAAETALEQLTNG.

Residues 5–127 (IDKLERKLGY…IIGAIYLDSD (123 aa)) enclose the RNase III domain. Mg(2+) is bound at residue E40. Residue D44 is part of the active site. Mg(2+)-binding residues include D113 and E116. E116 is an active-site residue. One can recognise a DRBM domain in the interval 154–224 (DPKTRLQEFL…AETALEQLTN (71 aa)).

The protein belongs to the ribonuclease III family. As to quaternary structure, homodimer. The cofactor is Mg(2+).

It localises to the cytoplasm. The enzyme catalyses Endonucleolytic cleavage to 5'-phosphomonoester.. Its function is as follows. Digests double-stranded RNA. Involved in the processing of primary rRNA transcript to yield the immediate precursors to the large and small rRNAs (23S and 16S). Processes some mRNAs, and tRNAs when they are encoded in the rRNA operon. Processes pre-crRNA and tracrRNA of type II CRISPR loci if present in the organism. The sequence is that of Ribonuclease 3 from Vibrio campbellii (strain ATCC BAA-1116).